Consider the following 289-residue polypeptide: RNA-binding protein CP29B, chloroplastic (289 aa).

A chloroplast-targeting transit peptide spans 1–62; the sequence is MAASASSLAL…NSPASRFARN (62 aa). 2 positions are modified to phosphoserine: Ser6 and Ser12. At Val63 the chain carries N-acetylvaline. Residues 91–169 enclose the RRM 1 domain; it reads LKLFVGNLPF…RPLRVNAGPP (79 aa). A disordered region spans residues 158-199; the sequence is DGRPLRVNAGPPPPKREDGFSRGPRSSFGSSGSGYGGGGGSG. A linker (Gly-rich) region spans residues 170–203; it reads PPKREDGFSRGPRSSFGSSGSGYGGGGGSGAGSG. Over residues 178-187 the composition is skewed to low complexity; that stretch reads SRGPRSSFGS. The segment covering 188 to 199 has biased composition (gly residues); the sequence is SGSGYGGGGGSG. The 79-residue stretch at 204-282 folds into the RRM 2 domain; sequence NRVYVGNLSW…RQIRVSEAEA (79 aa).

ADP-ribosylated by the Pseudomonas syringae type III effector HopU1. ADP-ribosylation reduces the ability of the protein to bind RNA. Post-translationally, phosphorylated on tyrosine residues after treatment with abscisic acid (ABA). Phosphorylation may reduce the ability of the protein to bind RNA.

The protein localises to the plastid. It localises to the chloroplast. In terms of biological role, could be involved in splicing and/or processing of chloroplast RNA's. This is RNA-binding protein CP29B, chloroplastic from Arabidopsis thaliana (Mouse-ear cress).